Consider the following 129-residue polypeptide: Small ribosomal subunit protein uS11 (129 aa).

This sequence belongs to the universal ribosomal protein uS11 family. Part of the 30S ribosomal subunit. Interacts with proteins S7 and S18. Binds to IF-3.

Located on the platform of the 30S subunit, it bridges several disparate RNA helices of the 16S rRNA. Forms part of the Shine-Dalgarno cleft in the 70S ribosome. This chain is Small ribosomal subunit protein uS11, found in Staphylococcus carnosus (strain TM300).